A 310-amino-acid chain; its full sequence is Methionyl-tRNA formyltransferase (310 aa).

111–114 serves as a coordination point for (6S)-5,6,7,8-tetrahydrofolate; sequence SLLP.

Belongs to the Fmt family.

The catalysed reaction is L-methionyl-tRNA(fMet) + (6R)-10-formyltetrahydrofolate = N-formyl-L-methionyl-tRNA(fMet) + (6S)-5,6,7,8-tetrahydrofolate + H(+). In terms of biological role, attaches a formyl group to the free amino group of methionyl-tRNA(fMet). The formyl group appears to play a dual role in the initiator identity of N-formylmethionyl-tRNA by promoting its recognition by IF2 and preventing the misappropriation of this tRNA by the elongation apparatus. The protein is Methionyl-tRNA formyltransferase of Rhodopseudomonas palustris (strain BisB18).